Consider the following 262-residue polypeptide: Cutinase 2 (262 aa).

Tyr-61 serves as a coordination point for poly(ethylene terephthalate). Ser-131 acts as the Nucleophile in catalysis. 2 residues coordinate poly(ethylene terephthalate): Met-132 and Trp-156. Catalysis depends on charge relay system residues Asp-177 and His-209. A disulfide bridge links Cys-242 with Cys-260.

Belongs to the AB hydrolase superfamily.

The protein resides in the secreted. Its subcellular location is the periplasm. It catalyses the reaction a butanoate ester + H2O = an aliphatic alcohol + butanoate + H(+). The catalysed reaction is an acetyl ester + H2O = an aliphatic alcohol + acetate + H(+). The enzyme catalyses (ethylene terephthalate)(n) + H2O = (ethylene terephthalate)(n-1) + 4-[(2-hydroxyethoxy)carbonyl]benzoate + H(+). It carries out the reaction cutin + H2O = cutin monomers.. Functionally, catalyzes the hydrolysis of cutin, a polyester that forms the structure of plant cuticle. Shows esterase activity towards p-nitrophenol-linked aliphatic esters (pNP-aliphatic esters). Capable of degrading the plastic poly(ethylene terephthalate) (PET), the most abundant polyester plastic in the world. Capable of degrading the bioplastic poly(lactic acid) (PLLA). The polypeptide is Cutinase 2 (Thermobifida cellulosilytica).